The primary structure comprises 191 residues: Flavin prenyltransferase UbiX (191 aa).

Residues 13-15, threonine 39, 90-93, and arginine 125 each bind FMN; these read GAS and TMKT. Dimethylallyl phosphate-binding residues include tyrosine 155 and lysine 171.

Belongs to the UbiX/PAD1 family.

The catalysed reaction is dimethylallyl phosphate + FMNH2 = prenylated FMNH2 + phosphate. Functionally, flavin prenyltransferase that catalyzes the synthesis of the prenylated FMN cofactor (prenyl-FMN) for 4-hydroxy-3-polyprenylbenzoic acid decarboxylase UbiD. The prenyltransferase is metal-independent and links a dimethylallyl moiety from dimethylallyl monophosphate (DMAP) to the flavin N5 and C6 atoms of FMN. In Methanothermobacter thermautotrophicus (strain ATCC 29096 / DSM 1053 / JCM 10044 / NBRC 100330 / Delta H) (Methanobacterium thermoautotrophicum), this protein is Flavin prenyltransferase UbiX.